A 366-amino-acid polypeptide reads, in one-letter code: UDP-N-acetylglucosamine--N-acetylmuramyl-(pentapeptide) pyrophosphoryl-undecaprenol N-acetylglucosamine transferase (366 aa).

Residues 10 to 12 (TGG), N124, R166, S196, and Q297 contribute to the UDP-N-acetyl-alpha-D-glucosamine site.

Belongs to the glycosyltransferase 28 family. MurG subfamily.

It localises to the cell membrane. The enzyme catalyses di-trans,octa-cis-undecaprenyl diphospho-N-acetyl-alpha-D-muramoyl-L-alanyl-D-glutamyl-meso-2,6-diaminopimeloyl-D-alanyl-D-alanine + UDP-N-acetyl-alpha-D-glucosamine = di-trans,octa-cis-undecaprenyl diphospho-[N-acetyl-alpha-D-glucosaminyl-(1-&gt;4)]-N-acetyl-alpha-D-muramoyl-L-alanyl-D-glutamyl-meso-2,6-diaminopimeloyl-D-alanyl-D-alanine + UDP + H(+). Its pathway is cell wall biogenesis; peptidoglycan biosynthesis. Functionally, cell wall formation. Catalyzes the transfer of a GlcNAc subunit on undecaprenyl-pyrophosphoryl-MurNAc-pentapeptide (lipid intermediate I) to form undecaprenyl-pyrophosphoryl-MurNAc-(pentapeptide)GlcNAc (lipid intermediate II). This is UDP-N-acetylglucosamine--N-acetylmuramyl-(pentapeptide) pyrophosphoryl-undecaprenol N-acetylglucosamine transferase from Alkaliphilus metalliredigens (strain QYMF).